The chain runs to 412 residues: MERIPSAQPPPTCLPKAPGLEPGDLPGMDFAHMYQVYKSRRGIKRSEDSKETYKLPHRLIEKKRRDRINECIAQLKDLLPEHLKLTTLGHLEKAVVLELTLKHVKALTNLIDQQQQKIIALQSGLQAGDLSGRNVEAGQEMFCSGFQTCAREVLQYLAKHENTRDLKSSQLVTHLHRVVSELLQGGTSRKPSDPAPKAMDFKEKPSSLAKGSEGPGKNCVPVIQRTFAHSSGEQSGSDTDTDSGYGGESEKSELRVEQPYFKSDHGRRFTMGERISAIKQESEEPPMKKSRMQLSDDEGPFTSTDLISSPFLGPHPHQPPFCLPFYLIPPSATAYLPMLEKCWYPTSVPVLYPGLNASAAALSSFMNPDKISAPLLMPQRLPSPLPSHPAIDSSALLQALKQIPPLNLETKD.

The disordered stretch occupies residues 1-21 (MERIPSAQPPPTCLPKAPGLE). Positions 1–139 (MERIPSAQPP…LSGRNVEAGQ (139 aa)) are essential for interaction with BMAL1, E-box binding and repressor activity against the CLOCK-BMAL1 heterodimer. A bHLH domain is found at 52–107 (TYKLPHRLIEKKRRDRINECIAQLKDLLPEHLKLTTLGHLEKAVVLELTLKHVKAL). The tract at residues 75-79 (LKDLL) is necessary for interaction with RXRA and repressor activity against RXRA. The Orange domain maps to 142–175 (FCSGFQTCAREVLQYLAKHENTRDLKSSQLVTHL). Lys159 participates in a covalent cross-link: Glycyl lysine isopeptide (Lys-Gly) (interchain with G-Cter in SUMO1, SUMO2 and SUMO3). Lys167 is covalently cross-linked (Glycyl lysine isopeptide (Lys-Gly) (interchain with G-Cter in SUMO2)). Disordered stretches follow at residues 182–257 (LLQG…LRVE) and 279–298 (KQES…SDDE). At Ser235 the chain carries Phosphoserine. Residues 248–257 (ESEKSELRVE) show a composition bias toward basic and acidic residues. Residue Lys279 forms a Glycyl lysine isopeptide (Lys-Gly) (interchain with G-Cter in SUMO1); alternate linkage. A Glycyl lysine isopeptide (Lys-Gly) (interchain with G-Cter in SUMO1, SUMO2 and SUMO3); alternate cross-link involves residue Lys279. Residue Lys279 forms a Glycyl lysine isopeptide (Lys-Gly) (interchain with G-Cter in SUMO2); alternate linkage. Lys288 participates in a covalent cross-link: Glycyl lysine isopeptide (Lys-Gly) (interchain with G-Cter in SUMO2). Position 383 is a phosphoserine (Ser383).

In terms of assembly, homodimer. Heterodimer with BHLHE41/DEC2. Interacts with TCF3/E47. Interacts with ubiquitin-conjugating enzyme UBE2I/UBC9. Interacts with HDAC1, SUMO1, RXRA and BMAL1. In terms of processing, ubiquitinated; which may lead to proteasomal degradation. Post-translationally, sumoylation inhibits its ubiquitination and promotes its negative regulation of the CLOCK-BMAL1 heterodimer transcriptional activator activity.

It is found in the cytoplasm. The protein localises to the nucleus. Transcriptional repressor involved in the regulation of the circadian rhythm by negatively regulating the activity of the clock genes and clock-controlled genes. Acts as the negative limb of a novel autoregulatory feedback loop (DEC loop) which differs from the one formed by the PER and CRY transcriptional repressors (PER/CRY loop). Both these loops are interlocked as it represses the expression of PER1/2 and in turn is repressed by PER1/2 and CRY1/2. Represses the activity of the circadian transcriptional activator: CLOCK-BMAL1|BMAL2 heterodimer by competing for the binding to E-box elements (5'-CACGTG-3') found within the promoters of its target genes. Negatively regulates its own expression and the expression of DBP and BHLHE41/DEC2. Acts as a corepressor of RXR and the RXR-LXR heterodimers and represses the ligand-induced RXRA and NR1H3/LXRA transactivation activity. May be involved in the regulation of chondrocyte differentiation via the cAMP pathway. Represses the transcription of NR0B2 and attentuates the transactivation of NR0B2 by the CLOCK-BMAL1 complex. Drives the circadian rhythm of blood pressure through transcriptional repression of ATP1B1 in the cardiovascular system. This is Class E basic helix-loop-helix protein 40 (BHLHE40) from Ovis aries (Sheep).